We begin with the raw amino-acid sequence, 490 residues long: Cytochrome P450 71B28 (490 aa).

Residues 1-21 (MSVFLCFLCLLPLILIFLKNL) traverse the membrane as a helical segment. C440 is a binding site for heme.

The protein belongs to the cytochrome P450 family. The cofactor is heme.

It is found in the membrane. This chain is Cytochrome P450 71B28 (CYP71B28), found in Arabidopsis thaliana (Mouse-ear cress).